Here is a 299-residue protein sequence, read N- to C-terminus: Cytidine deaminase (299 aa).

CMP/dCMP-type deaminase domains follow at residues 56–176 and 194–299; these read SKIE…FGPK and LQGD…YIAV. Residue 97–99 coordinates substrate; that stretch reads NQE. Position 110 (histidine 110) interacts with Zn(2+). Glutamate 112 serves as the catalytic Proton donor. Residues cysteine 137 and cysteine 140 each coordinate Zn(2+).

Belongs to the cytidine and deoxycytidylate deaminase family. In terms of assembly, homodimer. Requires Zn(2+) as cofactor.

The enzyme catalyses cytidine + H2O + H(+) = uridine + NH4(+). It carries out the reaction 2'-deoxycytidine + H2O + H(+) = 2'-deoxyuridine + NH4(+). Functionally, this enzyme scavenges exogenous and endogenous cytidine and 2'-deoxycytidine for UMP synthesis. This is Cytidine deaminase from Haemophilus ducreyi (strain 35000HP / ATCC 700724).